A 124-amino-acid polypeptide reads, in one-letter code: Small ribosomal subunit protein uS12 (124 aa).

Aspartate 89 is subject to 3-methylthioaspartic acid.

This sequence belongs to the universal ribosomal protein uS12 family. Part of the 30S ribosomal subunit. Contacts proteins S8 and S17. May interact with IF1 in the 30S initiation complex.

In terms of biological role, with S4 and S5 plays an important role in translational accuracy. Its function is as follows. Interacts with and stabilizes bases of the 16S rRNA that are involved in tRNA selection in the A site and with the mRNA backbone. Located at the interface of the 30S and 50S subunits, it traverses the body of the 30S subunit contacting proteins on the other side and probably holding the rRNA structure together. The combined cluster of proteins S8, S12 and S17 appears to hold together the shoulder and platform of the 30S subunit. This Aliivibrio fischeri (strain ATCC 700601 / ES114) (Vibrio fischeri) protein is Small ribosomal subunit protein uS12.